A 305-amino-acid polypeptide reads, in one-letter code: Putative ABC transporter molybdenum-binding protein HVO_B0369 (305 aa).

The segment at residues 1 to 40 (MNPDSAAGRSSRRAFLAAVGGVAAGGLTATAGCLGRGEEA) is a signal peptide (tat-type signal).

It belongs to the bacterial solute-binding protein 1 family. WtpA subfamily. As to quaternary structure, the complex is composed of two ATP-binding proteins, two transmembrane proteins (HVO_B0370) and a solute-binding protein (HVO_B0369). Post-translationally, predicted to be exported by the Tat system. The position of the signal peptide cleavage has not been experimentally proven.

Functionally, part of an ABC transporter complex involved in molybdenum import. This Haloferax volcanii (strain ATCC 29605 / DSM 3757 / JCM 8879 / NBRC 14742 / NCIMB 2012 / VKM B-1768 / DS2) (Halobacterium volcanii) protein is Putative ABC transporter molybdenum-binding protein HVO_B0369.